Reading from the N-terminus, the 131-residue chain is M-zodatoxin-Lt8o (131 aa).

A signal peptide spans 1 to 20; the sequence is MKYFVVALALVAAFACIAES. The propeptide occupies 21–60; the sequence is KPAESEHELAEVEEENELADLEDAVWLEHLADLSDLEEAR.

This sequence belongs to the cationic peptide 06 (cytoinsectotoxin) family. Expressed by the venom gland.

The protein localises to the secreted. Insecticidal, cytolytic and antimicrobial peptide. Forms voltage-dependent, ion-permeable channels in membranes. At high concentration causes cell membrane lysis. The sequence is that of M-zodatoxin-Lt8o (cit 1-14) from Lachesana tarabaevi (Spider).